The primary structure comprises 912 residues: Accessory gland protein Acp36DE (912 aa).

Positions 1–23 are cleaved as a signal peptide; sequence MWTLTCQQFIALILLGTLVPSES. 4 stretches are compositionally biased toward low complexity: residues 193 to 220, 230 to 255, 271 to 324, and 521 to 544; these read QSQS…QEQS, SESQ…SQRQ, KSNE…GLQQ, and QSQL…EQLQ. Disordered stretches follow at residues 193-255, 271-349, 518-544, 638-671, and 732-912; these read QSQS…SQRQ, KSNE…QKQL, TQTQ…EQLQ, PSEG…SGGG, and GQQQ…NLSG. 2 stretches are compositionally biased toward low complexity: residues 732 to 757 and 765 to 785; these read GQQQ…SSSQ and QSTG…GLQT. The span at 803-818 shows a compositional bias: basic and acidic residues; that stretch reads RLKEQEQLRIQTENDQ. A compositionally biased stretch (low complexity) spans 821–845; that stretch reads SSSSSHSNSQNSQSSSSQSSQASQS. The segment covering 851 to 861 has biased composition (polar residues); that stretch reads EAGNRNTLLLD. The span at 862-897 shows a compositional bias: low complexity; the sequence is QSSSKTQSESKSESSSQSSSHSSSQSTSNSSSNVQS. A compositionally biased stretch (polar residues) spans 898–912; sequence KLQGESQALLNNLSG.

Post-translationally, proteolytically cleaved by the seminal metalloprotease Semp1. Cleavage appears to take place in the mated female. In terms of tissue distribution, detected in the male accessory glands (at protein level). Produced in the accessory glands and secreted into seminal fluid.

Its subcellular location is the secreted. Functionally, responsible for physiological and behavioral changes in mated female flies. Associates with sperm and localizes to specific regions of the female reproductive tract, including the sperm storage organs. It accelerates sperm accumulation into storage but does not mediate the entry of the first sperm into storage. Once sperm storage has initiated it seems to act as a guidance factor helping subsequent sperm move into storage, a corral concentrating sperm around the SSO entrances and/or a trigger for responses within the female that accelerate storage of sperm. This chain is Accessory gland protein Acp36DE (Acp36DE), found in Drosophila melanogaster (Fruit fly).